Reading from the N-terminus, the 166-residue chain is ATP synthase subunit b (166 aa).

The helical transmembrane segment at 27-47 (FFVVLLIFLIVLGVIAKWVVP) threads the bilayer. Residues 124 to 143 (SADQQLSQQGSAAQSELQSS) are disordered.

The protein belongs to the ATPase B chain family. F-type ATPases have 2 components, F(1) - the catalytic core - and F(0) - the membrane proton channel. F(1) has five subunits: alpha(3), beta(3), gamma(1), delta(1), epsilon(1). F(0) has three main subunits: a(1), b(2) and c(10-14). The alpha and beta chains form an alternating ring which encloses part of the gamma chain. F(1) is attached to F(0) by a central stalk formed by the gamma and epsilon chains, while a peripheral stalk is formed by the delta and b chains.

Its subcellular location is the cell membrane. Its function is as follows. F(1)F(0) ATP synthase produces ATP from ADP in the presence of a proton or sodium gradient. F-type ATPases consist of two structural domains, F(1) containing the extramembraneous catalytic core and F(0) containing the membrane proton channel, linked together by a central stalk and a peripheral stalk. During catalysis, ATP synthesis in the catalytic domain of F(1) is coupled via a rotary mechanism of the central stalk subunits to proton translocation. In terms of biological role, component of the F(0) channel, it forms part of the peripheral stalk, linking F(1) to F(0). In Mycolicibacterium vanbaalenii (strain DSM 7251 / JCM 13017 / BCRC 16820 / KCTC 9966 / NRRL B-24157 / PYR-1) (Mycobacterium vanbaalenii), this protein is ATP synthase subunit b.